The sequence spans 874 residues: Alanine--tRNA ligase (874 aa).

Residues His562, His566, Cys665, and His669 each coordinate Zn(2+).

This sequence belongs to the class-II aminoacyl-tRNA synthetase family. The cofactor is Zn(2+).

It is found in the cytoplasm. The catalysed reaction is tRNA(Ala) + L-alanine + ATP = L-alanyl-tRNA(Ala) + AMP + diphosphate. Catalyzes the attachment of alanine to tRNA(Ala) in a two-step reaction: alanine is first activated by ATP to form Ala-AMP and then transferred to the acceptor end of tRNA(Ala). Also edits incorrectly charged Ser-tRNA(Ala) and Gly-tRNA(Ala) via its editing domain. In Pseudomonas syringae pv. syringae (strain B728a), this protein is Alanine--tRNA ligase.